Here is a 641-residue protein sequence, read N- to C-terminus: MTQSVHAETHGFQTEVKQLLSLMAHSLYSNKEVFLRELISNASDAADKLRFKALSDASLFENDGQLRVRLVVDKENRTLTISDNGIGMTRDQVIEHLGTIAKSGTAEFFKNLSGDQGRDSQLIGQFGVGFYSAFIVADKVTVVSRAAGTAPEQGVQWESEGEGSFTVADVTKAGRGTDVILHLRAEEDEFLDDWRLRSVVSKYSDHISVPVEMYKEGTPDSVGEGEEDGETIVGTPGEWEQVNRATALWTRNPKEIKDEEYQEFYKHVAHDFEDPLLWGHNRVEGAQEYTSLLYVPARAPFDLYNRDQKHGLKLYVQRVFIMDDAEQFMPAYLRFVKGVLDSNDLPLNVSREILQDNKVTVSLRKACSKRVLTMLAKLAKDDAEKYAKFWSEFGNVLKEGPAEDYANREEIAKLLRFASTAGEGEAQTVSLEDYVGRMKEGQQKIYYITADSYAAAKNSPHLEIFRKKGVEVLLMWERVDEWLMSHLTEFDGKQLVSVTRGELDLGDLEDEASKQAQEEAEKANAGLVERVKQSLGEAVKEVRVTHRLTDSPSCIVTDAHGMSTQMIKLMRAAGQPVPEQKYILELNPDHALVKKLGAIEDEALFGEWVTLLHEQAQLAEQGGLNDPASFVSRINRLLLQA.

Residues 1 to 351 form an a; substrate-binding region; that stretch reads MTQSVHAETH…SNDLPLNVSR (351 aa). The segment at 352–568 is b; that stretch reads EILQDNKVTV…AHGMSTQMIK (217 aa). The interval 569–641 is c; it reads LMRAAGQPVP…SRINRLLLQA (73 aa).

Belongs to the heat shock protein 90 family. As to quaternary structure, homodimer.

Its subcellular location is the cytoplasm. Functionally, molecular chaperone. Has ATPase activity. This Aeromonas hydrophila subsp. hydrophila (strain ATCC 7966 / DSM 30187 / BCRC 13018 / CCUG 14551 / JCM 1027 / KCTC 2358 / NCIMB 9240 / NCTC 8049) protein is Chaperone protein HtpG.